Here is a 388-residue protein sequence, read N- to C-terminus: Succinate--CoA ligase [ADP-forming] subunit beta (388 aa).

The ATP-grasp domain occupies 9-244 (KELFARRGLP…VTQEDAREAH (236 aa)). ATP is bound by residues K46, 53 to 55 (GRG), E99, T102, and E107. Mg(2+) is bound by residues N199 and D213. Residues N264 and 321 to 323 (GIV) contribute to the substrate site.

It belongs to the succinate/malate CoA ligase beta subunit family. In terms of assembly, heterotetramer of two alpha and two beta subunits. Mg(2+) is required as a cofactor.

It catalyses the reaction succinate + ATP + CoA = succinyl-CoA + ADP + phosphate. It carries out the reaction GTP + succinate + CoA = succinyl-CoA + GDP + phosphate. It functions in the pathway carbohydrate metabolism; tricarboxylic acid cycle; succinate from succinyl-CoA (ligase route): step 1/1. Succinyl-CoA synthetase functions in the citric acid cycle (TCA), coupling the hydrolysis of succinyl-CoA to the synthesis of either ATP or GTP and thus represents the only step of substrate-level phosphorylation in the TCA. The beta subunit provides nucleotide specificity of the enzyme and binds the substrate succinate, while the binding sites for coenzyme A and phosphate are found in the alpha subunit. The chain is Succinate--CoA ligase [ADP-forming] subunit beta from Hamiltonella defensa subsp. Acyrthosiphon pisum (strain 5AT).